Reading from the N-terminus, the 181-residue chain is ADP-ribosylation factor 1 (181 aa).

Residue Gly2 is the site of N-myristoyl glycine attachment. GTP contacts are provided by residues 24 to 31, 67 to 71, and 126 to 129; these read GLDAAGKT, DVGGQ, and NKQD.

This sequence belongs to the small GTPase superfamily. Arf family. In terms of tissue distribution, seedling shoots.

It is found in the golgi apparatus. It carries out the reaction GTP + H2O = GDP + phosphate + H(+). Its function is as follows. GTP-binding protein involved in protein trafficking; may modulate vesicle budding and uncoating within the Golgi apparatus. This Oryza sativa subsp. japonica (Rice) protein is ADP-ribosylation factor 1.